A 199-amino-acid polypeptide reads, in one-letter code: UPF0056 membrane protein bbp_399 (199 aa).

Transmembrane regions (helical) follow at residues 7 to 29 (VTILLILIMDPLGNLPIFMSILK), 39 to 58 (ILIREMMIALLIMLLFLFAG), 71 to 93 (TVSVSGGIILFLIAIKMIFPTYE), 108 to 130 (FLVPLAIPLVAGPSLLATLMLLS), 137 to 156 (ILYLIGSLLIAWMITVVILL), and 176 to 198 (LMGLILIMLSTQMFLDGIKSWFY).

This sequence belongs to the UPF0056 (MarC) family.

It localises to the cell membrane. This chain is UPF0056 membrane protein bbp_399, found in Buchnera aphidicola subsp. Baizongia pistaciae (strain Bp).